We begin with the raw amino-acid sequence, 404 residues long: Snake venom metalloproteinase H5 (404 aa).

The signal sequence occupies residues 1–6 (FPYQGS). A propeptide spanning residues 7-177 (SIMLESGKVN…KPSWVNLTPK (171 aa)) is cleaved from the precursor. Positions 184–379 (TSVNLQLVVD…KKPKCIHKKS (196 aa)) constitute a Peptidase M12B domain. 3 disulfides stabilise this stretch: Cys-295–Cys-374, Cys-336–Cys-358, and Cys-338–Cys-341. His-320 is a binding site for Zn(2+). The active site involves Glu-321. Zn(2+)-binding residues include His-324 and His-330. A propeptide spanning residues 379–404 (SLKTDTVSTSVSGNEPLDDNVDGFHA) is cleaved from the precursor. The segment at 385–404 (VSTSVSGNEPLDDNVDGFHA) is disordered. A compositionally biased stretch (acidic residues) spans 394 to 404 (PLDDNVDGFHA).

In terms of assembly, monomer. Zn(2+) serves as cofactor. In terms of tissue distribution, expressed by the venom gland.

Its subcellular location is the secreted. Its function is as follows. This probable venom zinc protease is not hemorrhagic when 3 ug are injected onto the back skin of guinea pig. The chain is Snake venom metalloproteinase H5 from Deinagkistrodon acutus (Hundred-pace snake).